The chain runs to 194 residues: Lysozyme g-like protein 1 (194 aa).

The first 19 residues, 1-19 (MSALWLLLGLLALMDLSES), serve as a signal peptide directing secretion. Cystine bridges form between C24/C80 and C38/C49.

It belongs to the glycosyl hydrolase 23 family.

The protein resides in the secreted. The chain is Lysozyme g-like protein 1 (LYG1) from Homo sapiens (Human).